We begin with the raw amino-acid sequence, 238 residues long: Purine nucleoside phosphorylase DeoD-type (238 aa).

Position 4 (His4) interacts with a purine D-ribonucleoside. Phosphate is bound by residues Gly20, Arg24, Arg43, and 87-90; that span reads RVGS. A purine D-ribonucleoside contacts are provided by residues 179–181 and 203–204; these read EME and SD. Asp204 functions as the Proton donor in the catalytic mechanism.

This sequence belongs to the PNP/UDP phosphorylase family. In terms of assembly, homohexamer; trimer of homodimers.

It catalyses the reaction a purine D-ribonucleoside + phosphate = a purine nucleobase + alpha-D-ribose 1-phosphate. It carries out the reaction a purine 2'-deoxy-D-ribonucleoside + phosphate = a purine nucleobase + 2-deoxy-alpha-D-ribose 1-phosphate. Its function is as follows. Catalyzes the reversible phosphorolytic breakdown of the N-glycosidic bond in the beta-(deoxy)ribonucleoside molecules, with the formation of the corresponding free purine bases and pentose-1-phosphate. This chain is Purine nucleoside phosphorylase DeoD-type, found in Histophilus somni (strain 2336) (Haemophilus somnus).